Reading from the N-terminus, the 333-residue chain is DNA-directed RNA polymerase subunit alpha (333 aa).

Residues 1–233 (MVQEKLRFST…DLFIPFLHAE (233 aa)) are alpha N-terminal domain (alpha-NTD). Residues 266-333 (KKEIALKSIF…DILKIQKYFT (68 aa)) are alpha C-terminal domain (alpha-CTD).

The protein belongs to the RNA polymerase alpha chain family. In terms of assembly, in plastids the minimal PEP RNA polymerase catalytic core is composed of four subunits: alpha, beta, beta', and beta''. When a (nuclear-encoded) sigma factor is associated with the core the holoenzyme is formed, which can initiate transcription.

The protein resides in the plastid. Its subcellular location is the chloroplast. The enzyme catalyses RNA(n) + a ribonucleoside 5'-triphosphate = RNA(n+1) + diphosphate. DNA-dependent RNA polymerase catalyzes the transcription of DNA into RNA using the four ribonucleoside triphosphates as substrates. This Phaseolus angularis (Azuki bean) protein is DNA-directed RNA polymerase subunit alpha.